The sequence spans 175 residues: NADH-quinone oxidoreductase subunit B (175 aa).

Cys-54, Cys-55, Cys-119, and Cys-149 together coordinate [4Fe-4S] cluster.

This sequence belongs to the complex I 20 kDa subunit family. In terms of assembly, NDH-1 is composed of at least 14 different subunits, Nqo1 to Nqo14. The complex has a L-shaped structure, with the hydrophobic arm (subunits Nqo7, Nqo8, Nqo10 to Nqo14) embedded in the inner membrane and the hydrophilic peripheral arm (subunits Nqo1 to Nqo6, Nqo9) protruding into the bacterial cytoplasm. The hydrophilic domain contains all the redox centers. NADH-quinone oxidoreductase forms a supercomplex with ubiquinol-cytochrome c reductase complex (complex III or cytochrome b-c1 complex) and cytochrome c oxidase (complex IV), which stabilizes the NADH-quinone oxidoreductase complex. The cofactor is [4Fe-4S] cluster.

It is found in the cell inner membrane. It catalyses the reaction a quinone + NADH + 5 H(+)(in) = a quinol + NAD(+) + 4 H(+)(out). Functionally, NDH-1 shuttles electrons from NADH, via FMN and iron-sulfur (Fe-S) centers, to quinones in the respiratory chain. The immediate electron acceptor for the enzyme in this species is believed to be ubiquinone. Couples the redox reaction to proton translocation (for every two electrons transferred, four hydrogen ions are translocated across the cytoplasmic membrane), and thus conserves the redox energy in a proton gradient. The chain is NADH-quinone oxidoreductase subunit B from Paracoccus denitrificans (strain Pd 1222).